The sequence spans 79 residues: AVATALIQVAYMGLVGSFPFNSFLSGVLSCIGTAVLAVCLRIQVNKDNKEFKDLPPERAFADFVLCNLVLHLVIMNFLG.

Topologically, residues 1-19 (AVATALIQVAYMGLVGSFP) are lumenal. Residues 20-40 (FNSFLSGVLSCIGTAVLAVCL) form a helical membrane-spanning segment. Topologically, residues 41–58 (RIQVNKDNKEFKDLPPER) are cytoplasmic. Residues 59–79 (AFADFVLCNLVLHLVIMNFLG) form a helical membrane-spanning segment.

This sequence belongs to the DAD/OST2 family. As to quaternary structure, component of the oligosaccharyltransferase (OST) complex.

Its subcellular location is the endoplasmic reticulum membrane. Its pathway is protein modification; protein glycosylation. Functionally, subunit of the oligosaccharyl transferase (OST) complex that catalyzes the initial transfer of a defined glycan (Glc(3)Man(9)GlcNAc(2) in eukaryotes) from the lipid carrier dolichol-pyrophosphate to an asparagine residue within an Asn-X-Ser/Thr consensus motif in nascent polypeptide chains, the first step in protein N-glycosylation. N-glycosylation occurs cotranslationally and the complex associates with the Sec61 complex at the channel-forming translocon complex that mediates protein translocation across the endoplasmic reticulum (ER). All subunits are required for a maximal enzyme activity. The chain is Dolichyl-diphosphooligosaccharide--protein glycosyltransferase subunit DAD1 (DAD1) from Zea mays (Maize).